The sequence spans 217 residues: 3-isopropylmalate dehydratase small subunit (217 aa).

Belongs to the LeuD family. LeuD type 1 subfamily. As to quaternary structure, heterodimer of LeuC and LeuD.

The enzyme catalyses (2R,3S)-3-isopropylmalate = (2S)-2-isopropylmalate. The protein operates within amino-acid biosynthesis; L-leucine biosynthesis; L-leucine from 3-methyl-2-oxobutanoate: step 2/4. Functionally, catalyzes the isomerization between 2-isopropylmalate and 3-isopropylmalate, via the formation of 2-isopropylmaleate. In Delftia acidovorans (strain DSM 14801 / SPH-1), this protein is 3-isopropylmalate dehydratase small subunit.